A 262-amino-acid chain; its full sequence is Phosphatidylserine decarboxylase proenzyme (262 aa).

Active-site charge relay system; for autoendoproteolytic cleavage activity residues include aspartate 86, histidine 142, and serine 226. Residue serine 226 is the Schiff-base intermediate with substrate; via pyruvic acid; for decarboxylase activity of the active site. Position 226 is a pyruvic acid (Ser); by autocatalysis (serine 226).

The protein belongs to the phosphatidylserine decarboxylase family. PSD-B subfamily. Prokaryotic type I sub-subfamily. As to quaternary structure, heterodimer of a large membrane-associated beta subunit and a small pyruvoyl-containing alpha subunit. Requires pyruvate as cofactor. Post-translationally, is synthesized initially as an inactive proenzyme. Formation of the active enzyme involves a self-maturation process in which the active site pyruvoyl group is generated from an internal serine residue via an autocatalytic post-translational modification. Two non-identical subunits are generated from the proenzyme in this reaction, and the pyruvate is formed at the N-terminus of the alpha chain, which is derived from the carboxyl end of the proenzyme. The autoendoproteolytic cleavage occurs by a canonical serine protease mechanism, in which the side chain hydroxyl group of the serine supplies its oxygen atom to form the C-terminus of the beta chain, while the remainder of the serine residue undergoes an oxidative deamination to produce ammonia and the pyruvoyl prosthetic group on the alpha chain. During this reaction, the Ser that is part of the protease active site of the proenzyme becomes the pyruvoyl prosthetic group, which constitutes an essential element of the active site of the mature decarboxylase.

It is found in the cell membrane. The catalysed reaction is a 1,2-diacyl-sn-glycero-3-phospho-L-serine + H(+) = a 1,2-diacyl-sn-glycero-3-phosphoethanolamine + CO2. It functions in the pathway phospholipid metabolism; phosphatidylethanolamine biosynthesis; phosphatidylethanolamine from CDP-diacylglycerol: step 2/2. Catalyzes the formation of phosphatidylethanolamine (PtdEtn) from phosphatidylserine (PtdSer). The chain is Phosphatidylserine decarboxylase proenzyme from Bacillus mycoides (strain KBAB4) (Bacillus weihenstephanensis).